Reading from the N-terminus, the 152-residue chain is UPF0178 protein YaiI (152 aa).

Belongs to the UPF0178 family.

The polypeptide is UPF0178 protein YaiI (Escherichia coli O17:K52:H18 (strain UMN026 / ExPEC)).